We begin with the raw amino-acid sequence, 154 residues long: Large ribosomal subunit protein uL13 (154 aa).

The protein belongs to the universal ribosomal protein uL13 family. As to quaternary structure, part of the 50S ribosomal subunit.

Functionally, this protein is one of the early assembly proteins of the 50S ribosomal subunit, although it is not seen to bind rRNA by itself. It is important during the early stages of 50S assembly. This Allorhizobium ampelinum (strain ATCC BAA-846 / DSM 112012 / S4) (Agrobacterium vitis (strain S4)) protein is Large ribosomal subunit protein uL13.